The primary structure comprises 679 residues: Protein FAM178B (679 aa).

Residues 70-113 (PLDQGPRCPARRPCSPASAPAPTSPKKPKIQAPGETFPTDWSPP) are disordered. Over residues 75 to 90 (PRCPARRPCSPASAPA) the composition is skewed to low complexity.

It belongs to the FAM178 family.

The chain is Protein FAM178B from Homo sapiens (Human).